We begin with the raw amino-acid sequence, 149 residues long: Nucleoside diphosphate kinase (149 aa).

ATP contacts are provided by K9, F57, R85, T91, R102, and N112. H115 acts as the Pros-phosphohistidine intermediate in catalysis.

It belongs to the NDK family. As to quaternary structure, homotetramer. The cofactor is Mg(2+).

Its subcellular location is the cytoplasm. The enzyme catalyses a 2'-deoxyribonucleoside 5'-diphosphate + ATP = a 2'-deoxyribonucleoside 5'-triphosphate + ADP. It catalyses the reaction a ribonucleoside 5'-diphosphate + ATP = a ribonucleoside 5'-triphosphate + ADP. Major role in the synthesis of nucleoside triphosphates other than ATP. The ATP gamma phosphate is transferred to the NDP beta phosphate via a ping-pong mechanism, using a phosphorylated active-site intermediate. The protein is Nucleoside diphosphate kinase of Synechocystis sp. (strain ATCC 27184 / PCC 6803 / Kazusa).